The chain runs to 259 residues: PF03932 family protein CutC (259 aa).

It belongs to the CutC family. Homodimer.

Its subcellular location is the cytoplasm. The polypeptide is PF03932 family protein CutC (Salmonella typhi).